A 150-amino-acid chain; its full sequence is MGSSSLLLVCLAGMVYLTEAAPLVSHGSIDSKCPLMVKVLDAVRGRPATSIAVKVSKMSEEGDWKEFANGKTNEFGEIHELTTDEQFVQGLYKVEFDTSSYWKALGVSPFHEYADVVFSANDSGHRHYTIAALLSPFSYSTTAVVSDPKE.

The N-terminal stretch at 1–20 is a signal peptide; sequence MGSSSLLLVCLAGMVYLTEA. Cys33 bears the Sulfocysteine mark. Residues Lys38, Glu77, and Ser140 each coordinate L-thyroxine.

This sequence belongs to the transthyretin family. As to quaternary structure, homotetramer. Dimer of dimers. In the homotetramer, subunits assemble around a central channel that can accommodate two ligand molecules. Interacts with RBP4. In terms of processing, sulfonation of the reactive cysteine Cys-33 enhances the stability of the native conformation of TTR, avoiding misassembly of the protein leading to amyloid formation. In terms of tissue distribution, detected in choroid plexus (at protein level). Detected in choroid plexus.

Its subcellular location is the secreted. Its function is as follows. Thyroid hormone-binding protein. Probably transports thyroxine from the bloodstream to the brain. The sequence is that of Transthyretin (TTR) from Tiliqua rugosa (Shingleback lizard).